An 867-amino-acid polypeptide reads, in one-letter code: KH domain-containing protein akap-1 (867 aa).

Residues 108 to 128 (HALLIALGGFSIAALFVWYIN) form a helical membrane-spanning segment. Disordered regions lie at residues 145–458 (SNGL…QKRV) and 481–523 (HENA…GLTT). The segment covering 152-162 (ATASDVQTENG) has biased composition (polar residues). Basic and acidic residues-rich tracts occupy residues 186–211 (QQKDEDEKTQKKDAVQNEKPSIDKKQ), 218–239 (TEKKEEKTVEIHTETEETDHVA), 247–275 (SEHKEHDKKTKQKNDEPVSIDKKSEEIEV), and 298–307 (QFVKKEEPKL). Over residues 336-345 (TKMNDATSPL) the composition is skewed to polar residues. Basic and acidic residues predominate over residues 363–383 (EMEKSFNEEEFRLNESSDIDR). Positions 397–408 (NKNRSSQKRKGG) are enriched in basic residues. Basic and acidic residues-rich tracts occupy residues 441–458 (LTKEKSVEETPEKSQKRV) and 481–490 (HENASYEKSD). Positions 494–507 (LDSQNSEASSQDSG) are enriched in polar residues. The region spanning 528–595 (LPMYEFEIPN…DEINHCLQML (68 aa)) is the KH domain. The Tudor domain occupies 689–747 (PCQNGLLCAAPVGNAWFRAVTVQYFDETDEVFVKFVDYGGYSKMARQDLRQIRTDLMSL).

It is found in the membrane. This Caenorhabditis elegans protein is KH domain-containing protein akap-1.